The chain runs to 127 residues: Riboflavin kinase (127 aa).

10 to 15 is a binding site for CDP; that stretch reads GLGEGR. The Mg(2+) site is built by T39 and N41. T96 and E104 together coordinate FMN. CDP is bound at residue 109-112; that stretch reads VHLR.

It belongs to the archaeal riboflavin kinase family. Mg(2+) is required as a cofactor.

The catalysed reaction is riboflavin + CTP = CDP + FMN + H(+). It participates in cofactor biosynthesis; FMN biosynthesis; FMN from riboflavin (CTP route): step 1/1. In terms of biological role, catalyzes the CTP-dependent phosphorylation of riboflavin (vitamin B2) to form flavin mononucleotide (FMN). This is Riboflavin kinase from Methanococcus maripaludis (strain C7 / ATCC BAA-1331).